A 268-amino-acid chain; its full sequence is 4-hydroxy-tetrahydrodipicolinate reductase (268 aa).

8–13 (GAAGRM) contributes to the NAD(+) binding site. Arginine 36 contacts NADP(+). Residues 99–101 (GTT) and 123–126 (AANF) contribute to the NAD(+) site. Catalysis depends on histidine 156, which acts as the Proton donor/acceptor. A (S)-2,3,4,5-tetrahydrodipicolinate-binding site is contributed by histidine 157. Catalysis depends on lysine 160, which acts as the Proton donor. 166 to 167 (GT) is a (S)-2,3,4,5-tetrahydrodipicolinate binding site.

It belongs to the DapB family.

Its subcellular location is the cytoplasm. It carries out the reaction (S)-2,3,4,5-tetrahydrodipicolinate + NAD(+) + H2O = (2S,4S)-4-hydroxy-2,3,4,5-tetrahydrodipicolinate + NADH + H(+). The enzyme catalyses (S)-2,3,4,5-tetrahydrodipicolinate + NADP(+) + H2O = (2S,4S)-4-hydroxy-2,3,4,5-tetrahydrodipicolinate + NADPH + H(+). It functions in the pathway amino-acid biosynthesis; L-lysine biosynthesis via DAP pathway; (S)-tetrahydrodipicolinate from L-aspartate: step 4/4. Functionally, catalyzes the conversion of 4-hydroxy-tetrahydrodipicolinate (HTPA) to tetrahydrodipicolinate. In Pseudomonas fluorescens (strain ATCC BAA-477 / NRRL B-23932 / Pf-5), this protein is 4-hydroxy-tetrahydrodipicolinate reductase.